We begin with the raw amino-acid sequence, 416 residues long: MEGTNNTTGWTHFDSTSNRTSKSFDEEVKLSYQVVTSFLLGALILCSIFGNACVVAAIALERSLQNVANYLIGSLAVTDLMVSVLVLPMAALYQVLNRWTLGQIPCDIFISLDMLCCTSSILHLCVIALDRYWAITEPIDYMKKRTPRRAAVLISVTWLVGFSISIPPMLIMRSQPSSMAEDRANSKQCKITQDPWYTIYSTFGAFYIPLTLMLVLYGRIFKAARFRIRRTVRKTEKKKVSDTCLALSPAMFHRKTPGDAHGKSWKRSVEPRPLPNVNGAVKHAGEGESLDIIEVQSNSRCNLPLPNTPGTVPLFENRHEKATETKRKIALARERKTVKTLGIIMGTFILCWLPFFIVALVMPFCQESCFMPHWLKDVINWLGYSNSLLNPIIYAYFNKDFQSAFKKIIKCHFCRA.

At 1–35 (MEGTNNTTGWTHFDSTSNRTSKSFDEEVKLSYQVV) the chain is on the extracellular side. N-linked (GlcNAc...) asparagine glycosylation is found at N5, N6, and N18. The chain crosses the membrane as a helical span at residues 36–56 (TSFLLGALILCSIFGNACVVA). The Cytoplasmic segment spans residues 57 to 70 (AIALERSLQNVANY). Residues 71 to 95 (LIGSLAVTDLMVSVLVLPMAALYQV) traverse the membrane as a helical segment. Residues 96-104 (LNRWTLGQI) lie on the Extracellular side of the membrane. The chain crosses the membrane as a helical span at residues 105–129 (PCDIFISLDMLCCTSSILHLCVIAL). C106 and C189 are disulfide-bonded. Serotonin is bound by residues D113 and C117. The short motif at 130-132 (DRY) is the DRY motif; important for ligand-induced conformation changes element. Over 130-149 (DRYWAITEPIDYMKKRTPRR) the chain is Cytoplasmic. The chain crosses the membrane as a helical span at residues 150–171 (AAVLISVTWLVGFSISIPPMLI). At 172 to 195 (MRSQPSSMAEDRANSKQCKITQDP) the chain is on the extracellular side. A helical membrane pass occupies residues 196–218 (WYTIYSTFGAFYIPLTLMLVLYG). Residues 219–340 (RIFKAARFRI…LARERKTVKT (122 aa)) lie on the Cytoplasmic side of the membrane. The 1D-myo-inositol 4-phosphate site is built by K339, T340, and G346. Residues 341-364 (LGIIMGTFILCWLPFFIVALVMPF) traverse the membrane as a helical segment. Topologically, residues 365 to 372 (CQESCFMP) are extracellular. Residues 373–397 (HWLKDVINWLGYSNSLLNPIIYAYF) traverse the membrane as a helical segment. The NPxxY motif; important for ligand-induced conformation changes and signaling motif lies at 390–394 (NPIIY). 1D-myo-inositol 4-phosphate-binding residues include F397, N398, and K399. Residues 398 to 416 (NKDFQSAFKKIIKCHFCRA) are Cytoplasmic-facing.

It belongs to the G-protein coupled receptor 1 family. 5-hydroxytryptamine receptor subfamily.

The protein localises to the cell membrane. Its activity is regulated as follows. G-protein coupled receptor activity is regulated by lipids: phosphatidylinositol 4-phosphate increases HTR1A-mediated activity. Its function is as follows. G-protein coupled receptor for 5-hydroxytryptamine (serotonin). Also functions as a receptor for various drugs and psychoactive substances. Ligand binding causes a conformation change that triggers signaling via guanine nucleotide-binding proteins (G proteins) and modulates the activity of downstream effectors, such as adenylate cyclase. HTR1A is coupled to G(i)/G(o) G alpha proteins and mediates inhibitory neurotransmission: signaling inhibits adenylate cyclase activity and activates a phosphatidylinositol-calcium second messenger system that regulates the release of Ca(2+) ions from intracellular stores. Beta-arrestin family members regulate signaling by mediating both receptor desensitization and resensitization processes. This chain is 5-hydroxytryptamine receptor 1A-beta (htr1a-B), found in Takifugu rubripes (Japanese pufferfish).